The chain runs to 520 residues: Protein EARLY FLOWERING 5 (520 aa).

3 short sequence motifs (nuclear localization signal) span residues 16–23, 52–59, and 71–78; these read YRKQIRKR, IRKLDMSK, and KKRQLEDT. A disordered region spans residues 83–410; the sequence is VKKRKEYDEK…PPSSFQDGQA (328 aa). Basic and acidic residues-rich tracts occupy residues 87–97 and 114–126; these read KEYDEKKKEQG and LTGE…EDSV. A compositionally biased stretch (low complexity) spans 148 to 168; sequence SSIGLAISSDGASSSSAALSS. 3 stretches are compositionally biased toward pro residues: residues 198–207, 216–227, and 235–253; these read PLPPLPPLPP, SPFPPPPPGPPP, and PPLP…PPPG. Polar residues-rich tracts occupy residues 267-281, 300-312, and 326-343; these read SDFT…NITS, AESN…NANL, and QQHQ…TNFQ. Composition is skewed to pro residues over residues 346-369 and 378-403; these read VHPP…PPHP and PRPP…PPPS.

In terms of tissue distribution, in seedlings, mostly expressed in the shoot apical meristem (SAM) and root tip.

It is found in the nucleus. In terms of biological role, involved in the regulation of flowering time in both long and short days. The polypeptide is Protein EARLY FLOWERING 5 (Arabidopsis thaliana (Mouse-ear cress)).